An 820-amino-acid polypeptide reads, in one-letter code: Pentatricopeptide repeat-containing protein At3g22150, chloroplastic (820 aa).

The disordered stretch occupies residues 1 to 42 (MAGSALPLPPPPPLSLQSPSQNQTRHSSTFSPPTLTPQTPSI). A chloroplast-targeting transit peptide spans 1-50 (MAGSALPLPPPPPLSLQSPSQNQTRHSSTFSPPTLTPQTPSIRSRLSKIC). Positions 22–42 (NQTRHSSTFSPPTLTPQTPSI) are enriched in polar residues. 17 PPR repeats span residues 69–99 (TTVLWNTIIIGFICNNLPHEALLFYSRMKKT), 106–136 (DAYTYSSTLKACAETKNLKAGKAVHCHLIRC), 141–177 (SRVVHNSLMNMYVSCLNAPDCFEYDVVRKVFDNMRRK), 178–212 (NVVAWNTLISWYVKTGRNAEACRQFGIMMRMEVKP), 213–247 (SPVSFVNVFPAVSISRSIKKANVFYGLMLKLGDEY), 250–284 (DLFVVSSAISMYAELGDIESSRRVFDSCVERNIEV), 285–316 (WNTMIGVYVQNDCLVESIELFLEAIGSKEIVS), 317–347 (DEVTYLLAASAVSALQQVELGRQFHGFVSKN), 352–382 (PIVIVNSLMVMYSRCGSVHKSFGVFLSMRER), 383–417 (DVVSWNTMISAFVQNGLDDEGLMLVYEMQKQGFKI), 418–452 (DYITVTALLSAASNLRNKEIGKQTHAFLIRQGIQF), 485–519 (DQATWNSMISGYTQNGHTEKTFLVFRKMLEQNIRP), 520–550 (NAVTVASILPACSQIGSVDLGKQLHGFSIRQ), 555–585 (NVFVASALVDMYSKAGAIKYAEDMFSQTKER), 586–620 (NSVTYTTMILGYGQHGMGERAISLFLSMQESGIKP), 621–651 (DAITFVAVLSACSYSGLIDEGLKIFEEMREV), and 657–691 (SSEHYCCITDMLGRVGRVNEAYEFVKGLGEEGNIA). The interval 693-770 (LWGSLLGSCK…EVGRSGIEIA (78 aa)) is type E motif. The interval 771 to 801 (GYVNCFVSRDQEHPHSSEIYDVIDGLAKDMR) is type E(+) motif.

This sequence belongs to the PPR family. PCMP-E subfamily.

The protein resides in the plastid. It is found in the chloroplast. The sequence is that of Pentatricopeptide repeat-containing protein At3g22150, chloroplastic (PCMP-E95) from Arabidopsis thaliana (Mouse-ear cress).